The following is a 134-amino-acid chain: Small ribosomal subunit protein uS11 (134 aa).

Belongs to the universal ribosomal protein uS11 family. Part of the 30S ribosomal subunit. Interacts with proteins S7 and S18. Binds to IF-3.

Located on the platform of the 30S subunit, it bridges several disparate RNA helices of the 16S rRNA. Forms part of the Shine-Dalgarno cleft in the 70S ribosome. In Corynebacterium jeikeium (strain K411), this protein is Small ribosomal subunit protein uS11.